The primary structure comprises 483 residues: Probable cytochrome P450 517A1 (483 aa).

The helical transmembrane segment at 1–21 threads the bilayer; sequence MEIINVFLFLIILFLVKDFVK. Residue Cys-429 coordinates heme.

Belongs to the cytochrome P450 family. The cofactor is heme.

It is found in the membrane. The sequence is that of Probable cytochrome P450 517A1 (cyp517A1) from Dictyostelium discoideum (Social amoeba).